The chain runs to 354 residues: MTELKNDRYLRALLRQPVDVTPVWMMRQAGRYLPEYKATRAQAGDFMSLCKNAELACEVTLQPLRRYPLDAAILFSDILTVPDAMGLGLYFEAGEGPRFTSPVTCKADVDKLPIPDPEDELGYVMNAVRTIRRELKGEVPLIGFSGSPWTLATYMVEGGSSKAFTVIKKMMYADPQALHALLDKLAKSVALYLNAQIKAGAQAVMIFDTWGGVLTGRDYQQFSLYYMHKIVDGLLRENDGRRVPVTLFTKGGGQWLEAMAETGCDALGLDWTTDIADARRRVGNKVALQGNMDPSMLYAPPARIEEEVATILAGFGHGEGHVFNLGHGIHQDVPPEHAGVFVEAVHRLSEQYHR.

Substrate-binding positions include 27–31 (RQAGR), phenylalanine 46, aspartate 77, tyrosine 154, threonine 209, and histidine 327.

Belongs to the uroporphyrinogen decarboxylase family. As to quaternary structure, homodimer.

The protein localises to the cytoplasm. The catalysed reaction is uroporphyrinogen III + 4 H(+) = coproporphyrinogen III + 4 CO2. It functions in the pathway porphyrin-containing compound metabolism; protoporphyrin-IX biosynthesis; coproporphyrinogen-III from 5-aminolevulinate: step 4/4. In terms of biological role, catalyzes the decarboxylation of four acetate groups of uroporphyrinogen-III to yield coproporphyrinogen-III. The chain is Uroporphyrinogen decarboxylase from Escherichia coli O157:H7.